We begin with the raw amino-acid sequence, 469 residues long: Glutamate--tRNA ligase (469 aa).

A 'HIGH' region motif is present at residues 9–19; that stretch reads PSPTGYLHVGG. Zn(2+) contacts are provided by C98, C100, C125, and D127. The 'KMSKS' region motif lies at 237–241; the sequence is KLSKR. Residue K240 participates in ATP binding.

Belongs to the class-I aminoacyl-tRNA synthetase family. Glutamate--tRNA ligase type 1 subfamily. Monomer. It depends on Zn(2+) as a cofactor.

The protein resides in the cytoplasm. The catalysed reaction is tRNA(Glu) + L-glutamate + ATP = L-glutamyl-tRNA(Glu) + AMP + diphosphate. Catalyzes the attachment of glutamate to tRNA(Glu) in a two-step reaction: glutamate is first activated by ATP to form Glu-AMP and then transferred to the acceptor end of tRNA(Glu). In Erwinia tasmaniensis (strain DSM 17950 / CFBP 7177 / CIP 109463 / NCPPB 4357 / Et1/99), this protein is Glutamate--tRNA ligase.